The following is a 469-amino-acid chain: 3-isopropylmalate dehydratase large subunit (469 aa).

3 residues coordinate [4Fe-4S] cluster: C347, C410, and C413.

This sequence belongs to the aconitase/IPM isomerase family. LeuC type 1 subfamily. As to quaternary structure, heterodimer of LeuC and LeuD. It depends on [4Fe-4S] cluster as a cofactor.

It catalyses the reaction (2R,3S)-3-isopropylmalate = (2S)-2-isopropylmalate. It functions in the pathway amino-acid biosynthesis; L-leucine biosynthesis; L-leucine from 3-methyl-2-oxobutanoate: step 2/4. Catalyzes the isomerization between 2-isopropylmalate and 3-isopropylmalate, via the formation of 2-isopropylmaleate. The protein is 3-isopropylmalate dehydratase large subunit of Burkholderia lata (strain ATCC 17760 / DSM 23089 / LMG 22485 / NCIMB 9086 / R18194 / 383).